The sequence spans 775 residues: BLOC-2 complex member HPS6 (775 aa).

As to quaternary structure, component of the biogenesis of lysosome-related organelles complex-2 (or BLOC2) composed of HPS3, HPS5 and HPS6. Interacts with HPS5 and HPS3. Interacts with biogenesis of lysosome-related organelles complex-1 (BLOC1). Interacts with AP-3 complex. Interacts with MNAT1. Interacts with DCTN1 and dynein intermediate chain. In terms of tissue distribution, ubiquitous.

The protein resides in the microsome membrane. It is found in the cytoplasm. It localises to the cytosol. The protein localises to the early endosome membrane. Its subcellular location is the lysosome membrane. Its function is as follows. May regulate the synthesis and function of lysosomes and of highly specialized organelles, such as melanosomes and platelet dense granules. Acts as a cargo adapter for the dynein-dynactin motor complex to mediate the transport of lysosomes from the cell periphery to the perinuclear region. Facilitates retrograde lysosomal trafficking by linking the motor complex to lysosomes, and perinuclear positioning of lysosomes is crucial for the delivery of endocytic cargos to lysosomes, for lysosome maturation and functioning. In Homo sapiens (Human), this protein is BLOC-2 complex member HPS6 (HPS6).